The sequence spans 239 residues: Elongation factor Ts (239 aa).

The tract at residues 82–85 (TDFV) is involved in Mg(2+) ion dislocation from EF-Tu. Residues 213 to 239 (AAQTKPKAEEKPAAKKATSKKKKGKKK) are disordered. Over residues 229-239 (ATSKKKKGKKK) the composition is skewed to basic residues.

This sequence belongs to the EF-Ts family.

Its subcellular location is the cytoplasm. Its function is as follows. Associates with the EF-Tu.GDP complex and induces the exchange of GDP to GTP. It remains bound to the aminoacyl-tRNA.EF-Tu.GTP complex up to the GTP hydrolysis stage on the ribosome. The chain is Elongation factor Ts from Acaryochloris marina (strain MBIC 11017).